Consider the following 374-residue polypeptide: Chaperone protein DnaJ (374 aa).

A J domain is found at 5 to 69 (DYYEVLGVSK…DKKAKYDQFG (65 aa)). The segment at 141–223 (GVNKKTILNL…CHGKGVESKR (83 aa)) adopts a CR-type zinc-finger fold. Cys-154, Cys-157, Cys-171, Cys-174, Cys-197, Cys-200, Cys-211, and Cys-214 together coordinate Zn(2+). CXXCXGXG motif repeat units lie at residues 154 to 161 (CTKCDGVG), 171 to 178 (CTKCNGAG), 197 to 204 (CDKCNGVG), and 211 to 218 (CKNCHGKG).

Belongs to the DnaJ family. In terms of assembly, homodimer. Zn(2+) is required as a cofactor.

It localises to the cytoplasm. In terms of biological role, participates actively in the response to hyperosmotic and heat shock by preventing the aggregation of stress-denatured proteins and by disaggregating proteins, also in an autonomous, DnaK-independent fashion. Unfolded proteins bind initially to DnaJ; upon interaction with the DnaJ-bound protein, DnaK hydrolyzes its bound ATP, resulting in the formation of a stable complex. GrpE releases ADP from DnaK; ATP binding to DnaK triggers the release of the substrate protein, thus completing the reaction cycle. Several rounds of ATP-dependent interactions between DnaJ, DnaK and GrpE are required for fully efficient folding. Also involved, together with DnaK and GrpE, in the DNA replication of plasmids through activation of initiation proteins. This is Chaperone protein DnaJ from Mesoplasma florum (strain ATCC 33453 / NBRC 100688 / NCTC 11704 / L1) (Acholeplasma florum).